A 275-amino-acid polypeptide reads, in one-letter code: Large ribosomal subunit protein uL2 (275 aa).

Residues 28 to 38 (RPYDGLLEKKS) are compositionally biased toward basic and acidic residues. 2 disordered regions span residues 28–58 (RPYDGLLEKKSKSGGRNNNGRITTRHVGGGH) and 223–275 (VAMN…RKAK). Residues 254-275 (KGHKTRKNKRTDKLIVRRRKAK) are compositionally biased toward basic residues.

It belongs to the universal ribosomal protein uL2 family. Part of the 50S ribosomal subunit. Forms a bridge to the 30S subunit in the 70S ribosome.

Functionally, one of the primary rRNA binding proteins. Required for association of the 30S and 50S subunits to form the 70S ribosome, for tRNA binding and peptide bond formation. It has been suggested to have peptidyltransferase activity; this is somewhat controversial. Makes several contacts with the 16S rRNA in the 70S ribosome. The polypeptide is Large ribosomal subunit protein uL2 (Chromohalobacter salexigens (strain ATCC BAA-138 / DSM 3043 / CIP 106854 / NCIMB 13768 / 1H11)).